The primary structure comprises 200 residues: ATP-dependent Clp protease proteolytic subunit (200 aa).

The Nucleophile role is filled by S96. H121 is an active-site residue.

The protein belongs to the peptidase S14 family. As to quaternary structure, fourteen ClpP subunits assemble into 2 heptameric rings which stack back to back to give a disk-like structure with a central cavity, resembling the structure of eukaryotic proteasomes.

It localises to the cytoplasm. It carries out the reaction Hydrolysis of proteins to small peptides in the presence of ATP and magnesium. alpha-casein is the usual test substrate. In the absence of ATP, only oligopeptides shorter than five residues are hydrolyzed (such as succinyl-Leu-Tyr-|-NHMec, and Leu-Tyr-Leu-|-Tyr-Trp, in which cleavage of the -Tyr-|-Leu- and -Tyr-|-Trp bonds also occurs).. Cleaves peptides in various proteins in a process that requires ATP hydrolysis. Has a chymotrypsin-like activity. Plays a major role in the degradation of misfolded proteins. This Leuconostoc citreum (strain KM20) protein is ATP-dependent Clp protease proteolytic subunit.